Reading from the N-terminus, the 142-residue chain is MHEVRVLAFQKIYSIDINQSAMDDIFDIFNIEDKDLDIENESIKSFYSSLVIGTFDNLEHIDSLIRDISLNWSLERMDKVDLAILRMGVYSLKFQNFENSKRAIIDEAILIAKKYGSKNSYKFINGILDALLKNMESGIEKK.

It belongs to the NusB family.

In terms of biological role, involved in transcription antitermination. Required for transcription of ribosomal RNA (rRNA) genes. Binds specifically to the boxA antiterminator sequence of the ribosomal RNA (rrn) operons. This is Transcription antitermination protein NusB from Borreliella burgdorferi (strain ATCC 35210 / DSM 4680 / CIP 102532 / B31) (Borrelia burgdorferi).